Consider the following 253-residue polypeptide: FGFR1 oncogene partner 2 (253 aa).

Residues 5 to 104 (IEKALADAKA…SALELIMSKY (100 aa)) are a coiled coil. Phosphoserine is present on Ser141. Positions 160–223 (LERRHLEANQ…LREILQITRE (64 aa)) form a coiled coil. The segment at 231–253 (DDASESTSLSALVTNSDLSLRKS) is disordered. A compositionally biased stretch (polar residues) spans 235-253 (ESTSLSALVTNSDLSLRKS).

It belongs to the SIKE family. In terms of tissue distribution, expressed in bone marrow, spleen and thymus.

Its subcellular location is the cytoplasm. May be involved in wound healing pathway. The chain is FGFR1 oncogene partner 2 (FGFR1OP2) from Homo sapiens (Human).